We begin with the raw amino-acid sequence, 250 residues long: 2,3-bisphosphoglycerate-dependent phosphoglycerate mutase (250 aa).

Substrate is bound by residues 10 to 17 (RHGESQWN), 23 to 24 (TG), Arg-62, 89 to 92 (ERHY), Lys-100, 116 to 117 (RR), and 185 to 186 (GN). The active-site Tele-phosphohistidine intermediate is His-11. The active-site Proton donor/acceptor is the Glu-89.

It belongs to the phosphoglycerate mutase family. BPG-dependent PGAM subfamily. As to quaternary structure, homodimer.

It carries out the reaction (2R)-2-phosphoglycerate = (2R)-3-phosphoglycerate. It participates in carbohydrate degradation; glycolysis; pyruvate from D-glyceraldehyde 3-phosphate: step 3/5. In terms of biological role, catalyzes the interconversion of 2-phosphoglycerate and 3-phosphoglycerate. The chain is 2,3-bisphosphoglycerate-dependent phosphoglycerate mutase from Yersinia pseudotuberculosis serotype IB (strain PB1/+).